Reading from the N-terminus, the 533-residue chain is tRNA(Ile)-lysidine synthase (533 aa).

21–26 (SGGADS) contributes to the ATP binding site. The CMP/dCMP-type deaminase domain maps to 377–500 (DLLDTAMGEA…DLLSSHWGHV (124 aa)).

This sequence belongs to the tRNA(Ile)-lysidine synthase family.

The protein resides in the cytoplasm. It catalyses the reaction cytidine(34) in tRNA(Ile2) + L-lysine + ATP = lysidine(34) in tRNA(Ile2) + AMP + diphosphate + H(+). Ligates lysine onto the cytidine present at position 34 of the AUA codon-specific tRNA(Ile) that contains the anticodon CAU, in an ATP-dependent manner. Cytidine is converted to lysidine, thus changing the amino acid specificity of the tRNA from methionine to isoleucine. This chain is tRNA(Ile)-lysidine synthase, found in Deinococcus deserti (strain DSM 17065 / CIP 109153 / LMG 22923 / VCD115).